The chain runs to 368 residues: Galactoside 2-alpha-L-fucosyltransferase Sec1 (368 aa).

At M1–C20 the chain is on the cytoplasmic side. A helical; Signal-anchor for type II membrane protein membrane pass occupies residues P21–C41. Topologically, residues H42–L368 are lumenal. Residues N195, N289, and N315 are each glycosylated (N-linked (GlcNAc...) asparagine).

This sequence belongs to the glycosyltransferase 11 family.

The protein localises to the golgi apparatus. The protein resides in the golgi stack membrane. The catalysed reaction is a ganglioside GM1 + GDP-beta-L-fucose = a ganglioside Fuc-GM1 + GDP + H(+). It functions in the pathway protein modification; protein glycosylation. Catalyzes the transfer of alpha 1,2-linked fucose to ganglioside GM1 and galacto-N-biose. This chain is Galactoside 2-alpha-L-fucosyltransferase Sec1, found in Mus musculus (Mouse).